Reading from the N-terminus, the 184-residue chain is Holliday junction branch migration complex subunit RuvA (184 aa).

Positions 1-62 (MIVGLVGEVL…EDSESLYGFV (62 aa)) are domain I. Residues 63-134 (DINEKKMFDR…ELGEFDISES (72 aa)) are domain II. Residues 134–135 (SN) are flexible linker. Residues 136 to 184 (VTSSAFQEASMALQSLGFKKEQIQKALQECTATDTASLVKEALKKIQKL) are domain III.

The protein belongs to the RuvA family. Homotetramer. Forms an RuvA(8)-RuvB(12)-Holliday junction (HJ) complex. HJ DNA is sandwiched between 2 RuvA tetramers; dsDNA enters through RuvA and exits via RuvB. An RuvB hexamer assembles on each DNA strand where it exits the tetramer. Each RuvB hexamer is contacted by two RuvA subunits (via domain III) on 2 adjacent RuvB subunits; this complex drives branch migration. In the full resolvosome a probable DNA-RuvA(4)-RuvB(12)-RuvC(2) complex forms which resolves the HJ.

Its subcellular location is the cytoplasm. The RuvA-RuvB-RuvC complex processes Holliday junction (HJ) DNA during genetic recombination and DNA repair, while the RuvA-RuvB complex plays an important role in the rescue of blocked DNA replication forks via replication fork reversal (RFR). RuvA specifically binds to HJ cruciform DNA, conferring on it an open structure. The RuvB hexamer acts as an ATP-dependent pump, pulling dsDNA into and through the RuvAB complex. HJ branch migration allows RuvC to scan DNA until it finds its consensus sequence, where it cleaves and resolves the cruciform DNA. The polypeptide is Holliday junction branch migration complex subunit RuvA (Nitratiruptor sp. (strain SB155-2)).